Consider the following 122-residue polypeptide: LYR motif-containing protein 1 (122 aa).

This sequence belongs to the complex I LYR family.

Its function is as follows. May promote cell proliferation and inhibition of apoptosis of preadipocytes. This Mus musculus (Mouse) protein is LYR motif-containing protein 1 (Lyrm1).